The primary structure comprises 283 residues: Pantothenate synthetase (283 aa).

Residue 30-37 participates in ATP binding; the sequence is MGALHEGH. The active-site Proton donor is the His-37. Gln-61 is a binding site for (R)-pantoate. Gln-61 lines the beta-alanine pocket. 147 to 150 is a binding site for ATP; that stretch reads GMKD. Gln-153 provides a ligand contact to (R)-pantoate. ATP-binding positions include Val-176 and 184–187; that span reads LSSR.

The protein belongs to the pantothenate synthetase family. Homodimer.

It is found in the cytoplasm. The catalysed reaction is (R)-pantoate + beta-alanine + ATP = (R)-pantothenate + AMP + diphosphate + H(+). The protein operates within cofactor biosynthesis; (R)-pantothenate biosynthesis; (R)-pantothenate from (R)-pantoate and beta-alanine: step 1/1. Functionally, catalyzes the condensation of pantoate with beta-alanine in an ATP-dependent reaction via a pantoyl-adenylate intermediate. This is Pantothenate synthetase from Endomicrobium trichonymphae.